The chain runs to 154 residues: Troponin C, isoform 1 (154 aa).

4 consecutive EF-hand domains span residues 8–43 (EQTA…LGHQ), 44–79 (LDDA…FLVE), 84–119 (AMMA…LDDK), and 120–154 (LTND…GGDD). Ca(2+)-binding residues include aspartate 57, aspartate 59, serine 61, glutamine 63, and glutamate 68. Ca(2+) contacts are provided by aspartate 133, aspartate 135, serine 137, threonine 139, and glutamate 144.

It belongs to the troponin C family. As to expression, present only in adult muscles.

The sequence is that of Troponin C, isoform 1 (TpnC41C) from Drosophila melanogaster (Fruit fly).